Reading from the N-terminus, the 1219-residue chain is Regulator of telomere elongation helicase 1 (1219 aa).

Residues 7–296 (NGVTVDFPFQ…TKAAQQGEPH (290 aa)) enclose the Helicase ATP-binding domain. 42–49 (SPTGTGKT) contacts ATP. The [4Fe-4S] cluster site is built by C145, C163, C172, and C207. Residues 151-167 (KKQESNHLQIHLCRKKV) carry the Nuclear localization signal motif. The DEAH box motif lies at 250-253 (DEAH). 7 disordered regions span residues 287–306 (TKAAQQGEPHPEFSADSPSP), 757–786 (PAPAPRATAPSVRGEDAVSEAKSPGPFFST), 839–877 (EHSEQRAGSPGEEQAHSCSTLSLLSEKRPAEEPRGGRKK), 979–1005 (RPEHSIPRRQRAQPVLDPTGRTAPDPK), 1017–1054 (DPQEHLNQGRPHLSPRPPPTGDPGSQPQWGSGVPRAGK), 1132–1151 (CTDLTGRPYPGMEPPGPQEE), and 1159–1219 (LTHR…EWGL). Residues 757–766 (PAPAPRATAP) are compositionally biased toward low complexity. A compositionally biased stretch (basic and acidic residues) spans 863-873 (SEKRPAEEPRG). The Nuclear localization signal motif lies at 871–877 (PRGGRKK). Over residues 1176 to 1185 (KTQSKISSFL) the composition is skewed to polar residues. A PIP-box motif is present at residues 1178–1185 (QSKISSFL). Residues 1200 to 1219 (AGPSQSSGPPHGPAASEWGL) show a composition bias toward low complexity.

It belongs to the helicase family. RAD3/XPD subfamily. Interacts with TERF1. Interacts (via PIP-box) with PCNA; the interaction is direct and essential for suppressing telomere fragility. Interacts with MMS19; the interaction mediates the association of RTEL1 with the cytosolic iron-sulfur protein assembly (CIA) complex.

Its subcellular location is the nucleus. The enzyme catalyses ATP + H2O = ADP + phosphate + H(+). In terms of biological role, a probable ATP-dependent DNA helicase implicated in telomere-length regulation, DNA repair and the maintenance of genomic stability. Acts as an anti-recombinase to counteract toxic recombination and limit crossover during meiosis. Regulates meiotic recombination and crossover homeostasis by physically dissociating strand invasion events and thereby promotes noncrossover repair by meiotic synthesis dependent strand annealing (SDSA) as well as disassembly of D loop recombination intermediates. Also disassembles T loops and prevents telomere fragility by counteracting telomeric G4-DNA structures, which together ensure the dynamics and stability of the telomere. The sequence is that of Regulator of telomere elongation helicase 1 from Homo sapiens (Human).